The sequence spans 952 residues: Inactive atromentin synthetase invA6 (952 aa).

The segment at 58–462 (DSSVQTRSFS…NGRIKDTVIV (405 aa)) is adenylation (A) domain. The Carrier domain maps to 594–672 (APSTETEKTL…SLAKYVDSLV (79 aa)). The tract at residues 599 to 669 (TEKTLGRLYA…VISSLAKYVD (71 aa)) is thiolation and peptide carrier (T) domain. S631 carries the post-translational modification O-(pantetheine 4'-phosphoryl)serine. A thioesterase (TE) domain region spans residues 695-939 (PIFMVHPGIG…LMDFDHVSGF (245 aa)).

The protein belongs to the ATP-dependent AMP-binding enzyme family.

In terms of biological role, inactive atromentin synthetase homolog. Does not accept 4-hydroxyphenylpyruvate (4-HPP) as substrate. Both the adenylation (A) and the thioesterase (TE) domain of the invA6 enzyme are inactive. This Paxillus involutus (Naked brimcap) protein is Inactive atromentin synthetase invA6 (invA6).